The primary structure comprises 162 residues: MTPLFRKAVWLLFAVSVCAFAGSLAAQYVLGMEPCVLCISQRLCVLATALCAAVVLACKPKGRVGGLSGAVFISIPAVTGISVAAYQLWLQSLPPGAAPSCGAPWTFRLKGWPLFDWFEPVVRGFGNCAEPDYLLGVALPVWSAAYFLAVVLTVWWAWARAK.

The Cytoplasmic segment spans residues 1–8 (MTPLFRKA). The chain crosses the membrane as a helical span at residues 9-25 (VWLLFAVSVCAFAGSLA). Residues 26–43 (AQYVLGMEPCVLCISQRL) lie on the Periplasmic side of the membrane. Cys-35 and Cys-38 are disulfide-bonded. A helical membrane pass occupies residues 44–60 (CVLATALCAAVVLACKP). Residues 61-67 (KGRVGGL) are Cytoplasmic-facing. The chain crosses the membrane as a helical span at residues 68-85 (SGAVFISIPAVTGISVAA). Residues 86-141 (YQLWLQSLPPGAAPSCGAPWTFRLKGWPLFDWFEPVVRGFGNCAEPDYLLGVALPV) lie on the Periplasmic side of the membrane. Cys-101 and Cys-128 form a disulfide bridge. Residues 142-160 (WSAAYFLAVVLTVWWAWAR) traverse the membrane as a helical segment. Residues 161-162 (AK) lie on the Cytoplasmic side of the membrane.

It belongs to the DsbB family.

It localises to the cell inner membrane. Its function is as follows. Required for disulfide bond formation in some periplasmic proteins. Acts by oxidizing the DsbA protein. This Neisseria gonorrhoeae (strain ATCC 700825 / FA 1090) protein is Disulfide bond formation protein B.